Consider the following 589-residue polypeptide: Transmembrane 9 superfamily member 1 (589 aa).

Residues 1–24 (MPSSSSAAVLVFLLLVSLLTPTFA) form the signal peptide. Residues 25–222 (SDSDHKYQAE…YPFFEHQIHW (198 aa)) are Lumenal-facing. Residues 223–243 (FSIFNSFMMVIFLTGLVSMIL) form a helical membrane-spanning segment. Residues 244–293 (MRTLRNDYAKYAREDDDLESLERDVSEESGWKLVHGDVFRPASSLVLLSA) are Cytoplasmic-facing. The helical transmembrane segment at 294-314 (VVGTGAQLALLVLLVILMAIV) threads the bilayer. Over 315 to 321 (GTLYVGR) the chain is Lumenal. Residues 322–342 (GAIVTTFIVCYALTSFVSGYV) form a helical membrane-spanning segment. Topologically, residues 343–364 (SGGMYSRSGGKHWIKCMVLTAS) are cytoplasmic. Residues 365 to 385 (LFPFLCFGIGFLLNTIAIFYG) form a helical membrane-spanning segment. The Lumenal segment spans residues 386-395 (SLAAIPFGTM). Residues 396–416 (VVVFVIWGFISFPLALLGTVV) form a helical membrane-spanning segment. Residues 417–448 (GRNWSGAPNNPCRVKTIPRPIPEKKWYLTPSV) are Cytoplasmic-facing. A helical transmembrane segment spans residues 449-469 (VSLMGGLLPFGSIFIEMYFVF). Topologically, residues 470-481 (TSFWNYKVYYVY) are lumenal. A helical membrane pass occupies residues 482-502 (GFMLLVFVILVIVTVCVTIVG). The Cytoplasmic segment spans residues 503 to 518 (TYFLLNAENYHWQWTS). Residues 519–539 (FFSAASTAVYVYLYSIYYYYV) form a helical membrane-spanning segment. Topologically, residues 540–550 (KTKMSGFFQTS) are lumenal. A helical membrane pass occupies residues 551 to 571 (FYFGYTMMFCLGLGILCGAVG). At 572 to 589 (YLGSNLFVRRIYRNIKCD) the chain is on the cytoplasmic side. Residues 578-583 (FVRRIY) carry the Endoplasmic reticulum export signal motif. The Golgi retention signal motif lies at 587–589 (KCD).

It belongs to the nonaspanin (TM9SF) (TC 9.A.2) family. In terms of tissue distribution, ubiquitous.

The protein localises to the endosome membrane. It localises to the golgi apparatus membrane. This chain is Transmembrane 9 superfamily member 1, found in Arabidopsis thaliana (Mouse-ear cress).